Consider the following 377-residue polypeptide: TraB domain-containing protein (377 aa).

Residue Met-1 is modified to N-acetylmethionine. The tract at residues 1–34 (MEEPEEQPPHEADTEPVVTSGASEAVPRVLPGDP) is disordered. Residue Thr-65 is modified to Phosphothreonine.

The chain is TraB domain-containing protein (TRABD) from Bos taurus (Bovine).